Here is a 420-residue protein sequence, read N- to C-terminus: Gamma-glutamyl phosphate reductase (420 aa).

The protein belongs to the gamma-glutamyl phosphate reductase family.

The protein localises to the cytoplasm. It catalyses the reaction L-glutamate 5-semialdehyde + phosphate + NADP(+) = L-glutamyl 5-phosphate + NADPH + H(+). It functions in the pathway amino-acid biosynthesis; L-proline biosynthesis; L-glutamate 5-semialdehyde from L-glutamate: step 2/2. Catalyzes the NADPH-dependent reduction of L-glutamate 5-phosphate into L-glutamate 5-semialdehyde and phosphate. The product spontaneously undergoes cyclization to form 1-pyrroline-5-carboxylate. This Acidiphilium cryptum (strain JF-5) protein is Gamma-glutamyl phosphate reductase.